A 392-amino-acid polypeptide reads, in one-letter code: Phospho-N-acetylmuramoyl-pentapeptide-transferase (392 aa).

Transmembrane regions (helical) follow at residues 28–48 (RALMAAMTALLIGLLAGPFVI), 76–96 (TMGGVLILLAIGISTLLWFDL), 100–120 (FVWIVLLVTLGFGAIGWVDDW), 137–157 (YLWQSVVGLIAALYLVFSISE), 193–213 (ISYPLGVFGFVILTYLVIVGS), 225–245 (GLAIMPVVMVGSSLGVFAYVT), 262–282 (SGELLIFCAAMAGSGLAFLWF), 289–309 (VFMGDVGALALGAALGTIAVI), 314–334 (IVLAIMGGIFVVEALSVMLQV), and 369–389 (QVVVRFWIITMLLCLVGLSTL).

The protein belongs to the glycosyltransferase 4 family. MraY subfamily. The cofactor is Mg(2+).

It localises to the cell inner membrane. It catalyses the reaction UDP-N-acetyl-alpha-D-muramoyl-L-alanyl-gamma-D-glutamyl-meso-2,6-diaminopimeloyl-D-alanyl-D-alanine + di-trans,octa-cis-undecaprenyl phosphate = di-trans,octa-cis-undecaprenyl diphospho-N-acetyl-alpha-D-muramoyl-L-alanyl-D-glutamyl-meso-2,6-diaminopimeloyl-D-alanyl-D-alanine + UMP. The protein operates within cell wall biogenesis; peptidoglycan biosynthesis. Functionally, catalyzes the initial step of the lipid cycle reactions in the biosynthesis of the cell wall peptidoglycan: transfers peptidoglycan precursor phospho-MurNAc-pentapeptide from UDP-MurNAc-pentapeptide onto the lipid carrier undecaprenyl phosphate, yielding undecaprenyl-pyrophosphoryl-MurNAc-pentapeptide, known as lipid I. This is Phospho-N-acetylmuramoyl-pentapeptide-transferase from Polaromonas naphthalenivorans (strain CJ2).